A 523-amino-acid polypeptide reads, in one-letter code: Protein NAM8 (523 aa).

The disordered stretch occupies residues 1 to 35; it reads MSYKQTTYYPSRGNLVRNDSSPYTNTISSETNNSS. The span at 24 to 35 shows a compositional bias: low complexity; the sequence is TNTISSETNNSS. RRM domains lie at 54–145, 163–242, and 313–385; these read NQLY…WATS, CSIF…PTSG, and TTVF…WGRS. A disordered region spans residues 239–260; that stretch reads PTSGQQQHVSGNNDYNRSSSSL. Residues 240–260 are compositionally biased toward polar residues; it reads TSGQQQHVSGNNDYNRSSSSL.

Component of the U1 small nuclear ribonucleoprotein complex (U1 snRNP).

Component of the U1 small nuclear ribonucleoprotein complex (U1 snRNP) involved in the initiation of meiotic recombination. Involved in the formation of DSBs at recombination hot-spots through meiosis-specific splicing of REC107 pre-mRNA. Collaborates with MER1 to promote splicing of essential meiotic mRNAs REC10, AMA1, MER3, HFM1, SPO22 and PCH2. NAM8 interacts with the pre-mRNA downstream of the 5' splice site, in a region of non-conserved sequence and is required for efficient splicing of uncapped RNA precursor. This Saccharomyces cerevisiae (strain ATCC 204508 / S288c) (Baker's yeast) protein is Protein NAM8.